A 1698-amino-acid polypeptide reads, in one-letter code: Protein 4.1 homolog (1698 aa).

The disordered stretch occupies residues 1–31 (MPAEIKPSAPAEPETPTKSKPKSSSSSHGKP). Low complexity predominate over residues 12-27 (EPETPTKSKPKSSSSS). The FERM domain maps to 32-314 (ALARVTLLDG…EHHTFFRLMT (283 aa)). The interval 317 to 434 (PVSKSKMFPV…KEEKERKERE (118 aa)) is hydrophilic. Disordered stretches follow at residues 335-361 (GRTQ…SGAR) and 374-710 (EKEK…SDPT). The segment covering 374–448 (EKEKVARKSS…EEKKKAEKAA (75 aa)) has biased composition (basic and acidic residues). A compositionally biased stretch (low complexity) spans 449 to 461 (KAALAAGAAAGAA). Residues Ser471, Ser474, and Ser478 each carry the phosphoserine modification. A compositionally biased stretch (basic and acidic residues) spans 499 to 514 (KDGKDKSGKDKDKEVG). A compositionally biased stretch (polar residues) spans 562-571 (DGNTSPTRKS). Ser566 is subject to Phosphoserine. The span at 579 to 589 (YDQDPNSRKSG) shows a compositional bias: basic and acidic residues. The segment covering 594-603 (EQLSPTSQQK) has biased composition (polar residues). The segment covering 618–627 (ALKETAEKLK) has biased composition (basic and acidic residues). Residues Ser659 and Ser687 each carry the phosphoserine modification. The span at 684–696 (RSYSPTKGPQGYS) shows a compositional bias: polar residues. Thr689 carries the phosphothreonine modification. Residues Ser697, Ser1398, Ser1401, and Ser1402 each carry the phosphoserine modification. Positions 1286–1698 (GEIVQVDPND…EKIEIQQQTQ (413 aa)) are C-terminal (CTD). Phosphothreonine is present on Thr1407. A compositionally biased stretch (basic and acidic residues) spans 1509 to 1532 (LGKNAKTEQLEEKTVATTRTHDPN). The segment at 1509 to 1599 (LGKNAKTEQL…SPLFTTSATT (91 aa)) is disordered. Positions 1533–1554 (KQQQRVVTQEVKTTATVTSGDQ) are enriched in polar residues. Positions 1561–1571 (VSSTSSGDSGT) are enriched in low complexity. Polar residues predominate over residues 1584–1599 (RTDNQKSPLFTTSATT). Ser1590 carries the phosphoserine modification.

As to expression, at onset of germ band retraction, expression is seen in epidermis, hindgut and foregut. During retraction, expression extends to tracheal branches and salivary glands.

The protein resides in the cell junction. It localises to the septate junction. An integral component of the septate junction. May play a role in cell-cell interactions that are necessary for proper development. Vital for embryonic development. The sequence is that of Protein 4.1 homolog (cora) from Drosophila melanogaster (Fruit fly).